The primary structure comprises 551 residues: Glucans biosynthesis protein D (551 aa).

A signal peptide (tat-type signal) is located at residues 1-32; that stretch reads MDRRRFIKGSMAMAAVCGTSGIASLFSQAAFA.

It belongs to the OpgD/OpgG family. Predicted to be exported by the Tat system. The position of the signal peptide cleavage has not been experimentally proven.

Its subcellular location is the periplasm. It participates in glycan metabolism; osmoregulated periplasmic glucan (OPG) biosynthesis. In terms of biological role, probably involved in the control of the structural glucose backbone of osmoregulated periplasmic glucans (OPGs). In Shigella flexneri, this protein is Glucans biosynthesis protein D (mdoD).